Reading from the N-terminus, the 247-residue chain is ATP synthase subunit a, chloroplastic (247 aa).

The next 5 helical transmembrane spans lie at 28 to 48 (GQVL…CLLG), 95 to 115 (VPFL…GALI), 134 to 154 (INTT…AGIS), 199 to 219 (LVVG…IMLL), and 220 to 240 (GLFT…AYIG).

It belongs to the ATPase A chain family. As to quaternary structure, F-type ATPases have 2 components, CF(1) - the catalytic core - and CF(0) - the membrane proton channel. CF(1) has five subunits: alpha(3), beta(3), gamma(1), delta(1), epsilon(1). CF(0) has four main subunits: a, b, b' and c.

It is found in the plastid. Its subcellular location is the chloroplast thylakoid membrane. Key component of the proton channel; it plays a direct role in the translocation of protons across the membrane. The sequence is that of ATP synthase subunit a, chloroplastic from Chlorella vulgaris (Green alga).